The primary structure comprises 111 residues: Phosphoribosyl-ATP pyrophosphatase (111 aa).

It belongs to the PRA-PH family.

The protein localises to the cytoplasm. The catalysed reaction is 1-(5-phospho-beta-D-ribosyl)-ATP + H2O = 1-(5-phospho-beta-D-ribosyl)-5'-AMP + diphosphate + H(+). Its pathway is amino-acid biosynthesis; L-histidine biosynthesis; L-histidine from 5-phospho-alpha-D-ribose 1-diphosphate: step 2/9. The polypeptide is Phosphoribosyl-ATP pyrophosphatase (Pseudomonas putida (strain W619)).